The sequence spans 260 residues: NH(3)-dependent NAD(+) synthetase (260 aa).

An ATP-binding site is contributed by 31 to 38 (GLSGGLDS). Asp-37 provides a ligand contact to Mg(2+). Arg-112 provides a ligand contact to deamido-NAD(+). Thr-132 contacts ATP. Residue Glu-137 participates in Mg(2+) binding. Lys-161 and Ser-183 together coordinate ATP.

It belongs to the NAD synthetase family. As to quaternary structure, homodimer.

The catalysed reaction is deamido-NAD(+) + NH4(+) + ATP = AMP + diphosphate + NAD(+) + H(+). The protein operates within cofactor biosynthesis; NAD(+) biosynthesis; NAD(+) from deamido-NAD(+) (ammonia route): step 1/1. In terms of biological role, catalyzes the ATP-dependent amidation of deamido-NAD to form NAD. Uses ammonia as a nitrogen source. This Helicobacter pylori (strain G27) protein is NH(3)-dependent NAD(+) synthetase.